The primary structure comprises 687 residues: Adhesion G-protein coupled receptor G1 (687 aa).

The first 25 residues, 1–25, serve as a signal peptide directing secretion; that stretch reads MTAQSLLQMTLFLLSLLFLVQGAHG. Heparin is bound at residue 26 to 33; it reads RGHREDFR. Over 26–402 the chain is Extracellular; that stretch reads RGHREDFRFC…VEVDAVHKHY (377 aa). 2 disulfide bridges follow: cysteine 35-cysteine 91 and cysteine 121-cysteine 177. Residues asparagine 39, asparagine 148, and asparagine 171 are each glycosylated (N-linked (GlcNAc...) asparagine). Heparin is bound at residue 190–200; it reads LKHPQKASRRP. Positions 224-395 constitute a GAIN-B domain; sequence DTVSFEEDRI…AVLMVSSVEV (172 aa). N-linked (GlcNAc...) asparagine glycosylation is found at asparagine 234, asparagine 303, asparagine 324, and asparagine 341. Intrachain disulfides connect cysteine 346–cysteine 377 and cysteine 366–cysteine 379. The interval 346–395 is GPS; it reads CVFWVEDPTLSSPGHWSSAGCETVRRETQTSCFCNHLTYFAVLMVSSVEV. The tract at residues 384–397 is stachel; it reads YFAVLMVSSVEVDA. The helical transmembrane segment at 403–423 threads the bilayer; that stretch reads LSLLSYVGCVISALACVVTIA. The Cytoplasmic segment spans residues 424-442; that stretch reads AYLCSRRKPRDYTIKVHMN. Residues 443–463 traverse the membrane as a helical segment; it reads LLLAVFLLDMSFLLSEPVALT. At 464–470 the chain is on the extracellular side; that stretch reads GSEAGCR. A helical transmembrane segment spans residues 471 to 491; that stretch reads AGAIFLHFSLLACLSWMGLEG. The Cytoplasmic segment spans residues 492 to 512; that stretch reads YNLYRLVVEVFGTYVPGYLLK. A helical membrane pass occupies residues 513–533; sequence LSAMGWGFPIFLVTLVALVDV. Over 534 to 570 the chain is Extracellular; the sequence is DNYGPIILAVHRTPESVIYPSMCWIRDSLVSYVTNLG. The chain crosses the membrane as a helical span at residues 571-591; that stretch reads LFSLVFLFNMAMLGTMVVQIL. Topologically, residues 592–603 are cytoplasmic; it reads RLRPHTQKWSHV. Residues 604–624 traverse the membrane as a helical segment; sequence LTLLGLSLVLGLPWALIFFSF. Residues 625-630 are Extracellular-facing; it reads ASGTFQ. Residues 631–651 form a helical membrane-spanning segment; that stretch reads LVVLYLFSIITSFQGFLIFIW. Residues 652–687 lie on the Cytoplasmic side of the membrane; it reads YWSMRLQARGGPSPLKSNSDSARLPISSGSTSSSRI. The interval 664-687 is disordered; the sequence is SPLKSNSDSARLPISSGSTSSSRI. Residues 678–687 show a composition bias toward low complexity; it reads SSGSTSSSRI.

The protein belongs to the G-protein coupled receptor 2 family. LN-TM7 subfamily. Heterodimer of 2 chains generated by proteolytic processing; the large extracellular N-terminal fragment (ADGRG1 NT) and the membrane-bound C-terminal fragment (ADGRG1-CT) predominantly remain associated and non-covalently linked. ADGRG1 NT self-associates in a trans-trans manner; the homophilic interaction enhances receptor signaling. Interacts with TGM2. Interacts with heparin; leading to the reduction of ADGRG1 shedding. Interacts with COL3A1. Part of a GPCR-tetraspanin complex at least consisting of ADGRG1, CD81, eventually CD9, and GNA11 in which CD81 is enhancing the association of ADGRG1 with GNA11. Autoproteolytically cleaved into 2 fragments; the large extracellular N-terminal fragment (ADGRG1 NT) and the membrane-bound C-terminal fragment (ADGRG1 CT) predominantly remain associated and non-covalently linked. Shedding to yield the secreted ADGRG1 N-terminal fragment seems to involve metalloprotease(s). Post-translationally, ubiquitinated. Undergoes polyubiquitination upon activation.

Its subcellular location is the cell membrane. The protein resides in the secreted. It localises to the membrane raft. Its activity is regulated as follows. Forms a heterodimer of 2 chains generated by proteolytic processing that remain associated through non-covalent interactions mediated by the GAIN-B domain. In the inactivated receptor, the Stachel sequence (also named stalk) is embedded in the GAIN-B domain, where it adopts a beta-strand conformation. On activation, the Stachel moves into the 7 transmembrane region and adopts a twisted hook-shaped configuration that forms contacts within the receptor, leading to coupling of a G-alpha protein, which activates signaling. The cleaved GAIN-B and N-terminal domains can then dissociate from the rest of the receptor. In terms of biological role, adhesion G-protein coupled receptor (aGPCR) for steroid hormone 17alpha-hydroxypregnenolone (17-OH), which is involved in cell adhesion and cell-cell interactions. Ligand binding causes a conformation change that triggers signaling via guanine nucleotide-binding proteins (G proteins) and modulates the activity of downstream effectors, such as RhoA pathway. ADGRG1 is coupled to G(12) and/or G(13) G proteins (GNA12 and GNA13, respectively) and mediates the activation Rho small GTPases. Acts as a potent suppressor of ferroptosis: binding to 17-OH-binding initiates signaling that down-regulates CD36 and alleviates ferroptosis-induced liver injury. Ligand-binding also induces cell adhesion activity via association with proteins such as collagen III/COL3A1 and TGM2. Mediates cell matrix adhesion in developing neurons and hematopoietic stem cells. Involved in cortical development, specifically in maintenance of the pial basement membrane integrity and in cortical lamination: association with COL3A1 in the developing brain inhibits neuronal migration via activation of the RhoA pathway. Together with TGM2, acts as a regulator of myelination and myelin repair in oligodendrocyte precursor cells. Acts as a hemostatic sensor of shear force: G protein-coupled receptor signaling is activated in response to shear force in platelets, promoting G(13) G protein signaling, and platelet shape change and aggregation in a COL3A1-dependent manner. Acts as an inhibitor of VEGFA production thereby inhibiting angiogenesis through a signaling pathway mediated by PRKCA. Plays a role in the maintenance of hematopoietic stem cells in bone marrow niche. Plays an essential role in testis development. This Pongo pygmaeus (Bornean orangutan) protein is Adhesion G-protein coupled receptor G1 (ADGRG1).